Consider the following 138-residue polypeptide: Protein Turandot B (138 aa).

Residues 1-21 form the signal peptide; that stretch reads MNFKTSLICFALLLIGTLCSA.

This sequence belongs to the Turandot family.

The protein resides in the secreted. A humoral factor that may play a role in stress tolerance. The protein is Protein Turandot B of Drosophila melanogaster (Fruit fly).